A 357-amino-acid polypeptide reads, in one-letter code: Sorbitol dehydrogenase 1 (357 aa).

C43 contacts Zn(2+). Residue Y49 participates in substrate binding. Residues H68 and E69 each contribute to the Zn(2+) site. E154 contacts substrate. NAD(+) is bound by residues D202, K207, 275–277 (VGM), and 299–301 (CFR). 2 residues coordinate substrate: R301 and Y302.

The protein belongs to the zinc-containing alcohol dehydrogenase family. In terms of assembly, homotetramer. Zn(2+) serves as cofactor.

The enzyme catalyses keto-D-fructose + NADH + H(+) = D-sorbitol + NAD(+). It carries out the reaction xylitol + NAD(+) = D-xylulose + NADH + H(+). In terms of biological role, polyol dehydrogenase that catalyzes the reversible NAD(+)-dependent oxidation of various sugar alcohols. Is active with D-sorbitol (D-glucitol) and xylitol as substrates, leading to the C2-oxidized product D-fructose and D-xylulose, respectively. Is likely involved in the utilization of D-sorbitol as a sole carbon source for growth. Has no activity on mannitol and primary alcohols such as ethanol. The protein is Sorbitol dehydrogenase 1 (SOR1) of Saccharomyces cerevisiae (strain ATCC 204508 / S288c) (Baker's yeast).